A 157-amino-acid polypeptide reads, in one-letter code: Deoxyuridine 5'-triphosphate nucleotidohydrolase (157 aa).

The dUMP site is built by S63, G76, D79, Y82, K87, R132, F137, and G138. The disordered stretch occupies residues 125-157; sequence NDLESTERGAGGFGSTGINDEKKRKLDEAEAKE. Basic and acidic residues predominate over residues 143 to 157; sequence NDEKKRKLDEAEAKE.

This sequence belongs to the dUTPase family. As to quaternary structure, homotrimer. Mg(2+) is required as a cofactor.

The catalysed reaction is dUTP + H2O = dUMP + diphosphate + H(+). It functions in the pathway pyrimidine metabolism; dUMP biosynthesis; dUMP from dCTP (dUTP route): step 2/2. Functionally, involved in nucleotide metabolism via production of dUMP, the immediate precursor of thymidine nucleotides, and decreases the intracellular concentration of dUTP so that uracil cannot be incorporated into DNA. This chain is Deoxyuridine 5'-triphosphate nucleotidohydrolase (DUT1), found in Yarrowia lipolytica (strain CLIB 122 / E 150) (Yeast).